The following is a 155-amino-acid chain: UPF0260 protein Smed_0627 (155 aa).

This sequence belongs to the UPF0260 family.

The sequence is that of UPF0260 protein Smed_0627 from Sinorhizobium medicae (strain WSM419) (Ensifer medicae).